Consider the following 366-residue polypeptide: Probable dual-specificity RNA methyltransferase RlmN (366 aa).

E107 acts as the Proton acceptor in catalysis. The Radical SAM core domain occupies A113–R342. Residues C120 and C353 are joined by a disulfide bond. [4Fe-4S] cluster contacts are provided by C127, C131, and C134. Residues G177–E178, S210, S233–H235, and N310 each bind S-adenosyl-L-methionine. C353 (S-methylcysteine intermediate) is an active-site residue.

The protein belongs to the radical SAM superfamily. RlmN family. It depends on [4Fe-4S] cluster as a cofactor.

The protein resides in the cytoplasm. It carries out the reaction adenosine(2503) in 23S rRNA + 2 reduced [2Fe-2S]-[ferredoxin] + 2 S-adenosyl-L-methionine = 2-methyladenosine(2503) in 23S rRNA + 5'-deoxyadenosine + L-methionine + 2 oxidized [2Fe-2S]-[ferredoxin] + S-adenosyl-L-homocysteine. It catalyses the reaction adenosine(37) in tRNA + 2 reduced [2Fe-2S]-[ferredoxin] + 2 S-adenosyl-L-methionine = 2-methyladenosine(37) in tRNA + 5'-deoxyadenosine + L-methionine + 2 oxidized [2Fe-2S]-[ferredoxin] + S-adenosyl-L-homocysteine. Its function is as follows. Specifically methylates position 2 of adenine 2503 in 23S rRNA and position 2 of adenine 37 in tRNAs. The sequence is that of Probable dual-specificity RNA methyltransferase RlmN from Chlorobium chlorochromatii (strain CaD3).